A 561-amino-acid chain; its full sequence is DNA ligase B (561 aa).

Lys125 acts as the N6-AMP-lysine intermediate in catalysis.

Belongs to the NAD-dependent DNA ligase family. LigB subfamily.

The enzyme catalyses NAD(+) + (deoxyribonucleotide)n-3'-hydroxyl + 5'-phospho-(deoxyribonucleotide)m = (deoxyribonucleotide)n+m + AMP + beta-nicotinamide D-nucleotide.. Functionally, catalyzes the formation of phosphodiester linkages between 5'-phosphoryl and 3'-hydroxyl groups in double-stranded DNA using NAD as a coenzyme and as the energy source for the reaction. The chain is DNA ligase B from Salmonella schwarzengrund (strain CVM19633).